The chain runs to 90 residues: MARTVQCIKLGKEAEGLDFPPYPGELGKRIFENVSKEAWAGWLKHQTMLVNENRLNLADARARQYLARQMEQHFFGGGADAAAGYVPPSA.

This sequence belongs to the Fe(2+)-trafficking protein family.

Functionally, could be a mediator in iron transactions between iron acquisition and iron-requiring processes, such as synthesis and/or repair of Fe-S clusters in biosynthetic enzymes. The sequence is that of Probable Fe(2+)-trafficking protein from Paracidovorax citrulli (strain AAC00-1) (Acidovorax citrulli).